A 403-amino-acid chain; its full sequence is Phosphopentomutase (403 aa).

Residues Asp13, Asp298, His303, Asp339, His340, and His351 each coordinate Mn(2+).

It belongs to the phosphopentomutase family. It depends on Mn(2+) as a cofactor.

It localises to the cytoplasm. It catalyses the reaction 2-deoxy-alpha-D-ribose 1-phosphate = 2-deoxy-D-ribose 5-phosphate. The catalysed reaction is alpha-D-ribose 1-phosphate = D-ribose 5-phosphate. It participates in carbohydrate degradation; 2-deoxy-D-ribose 1-phosphate degradation; D-glyceraldehyde 3-phosphate and acetaldehyde from 2-deoxy-alpha-D-ribose 1-phosphate: step 1/2. In terms of biological role, isomerase that catalyzes the conversion of deoxy-ribose 1-phosphate (dRib-1-P) and ribose 1-phosphate (Rib-1-P) to deoxy-ribose 5-phosphate (dRib-5-P) and ribose 5-phosphate (Rib-5-P), respectively. This is Phosphopentomutase from Streptococcus pyogenes serotype M3 (strain ATCC BAA-595 / MGAS315).